The following is a 346-amino-acid chain: Phosphoribosylformylglycinamidine cyclo-ligase (346 aa).

It belongs to the AIR synthase family.

Its subcellular location is the cytoplasm. The enzyme catalyses 2-formamido-N(1)-(5-O-phospho-beta-D-ribosyl)acetamidine + ATP = 5-amino-1-(5-phospho-beta-D-ribosyl)imidazole + ADP + phosphate + H(+). The protein operates within purine metabolism; IMP biosynthesis via de novo pathway; 5-amino-1-(5-phospho-D-ribosyl)imidazole from N(2)-formyl-N(1)-(5-phospho-D-ribosyl)glycinamide: step 2/2. The protein is Phosphoribosylformylglycinamidine cyclo-ligase of Bacillus anthracis (strain A0248).